A 150-amino-acid chain; its full sequence is 3-hydroxyacyl-[acyl-carrier-protein] dehydratase FabZ (150 aa).

Residue histidine 57 is part of the active site.

It belongs to the thioester dehydratase family. FabZ subfamily.

Its subcellular location is the cytoplasm. The enzyme catalyses a (3R)-hydroxyacyl-[ACP] = a (2E)-enoyl-[ACP] + H2O. Involved in unsaturated fatty acids biosynthesis. Catalyzes the dehydration of short chain beta-hydroxyacyl-ACPs and long chain saturated and unsaturated beta-hydroxyacyl-ACPs. This chain is 3-hydroxyacyl-[acyl-carrier-protein] dehydratase FabZ, found in Actinobacillus succinogenes (strain ATCC 55618 / DSM 22257 / CCUG 43843 / 130Z).